The chain runs to 324 residues: Acetyl-coenzyme A carboxylase carboxyl transferase subunit beta (324 aa).

The span at 1–16 shows a compositional bias: low complexity; sequence MTKNNNDLSNSSSNPP. The interval 1 to 51 is disordered; it reads MTKNNNDLSNSSSNPPSNRPVAGKEAELEIQRETHAAQSGQSESWLSRPIP. Residues 22–35 show a composition bias toward basic and acidic residues; the sequence is AGKEAELEIQRETH. Residues 36–45 are compositionally biased toward polar residues; that stretch reads AAQSGQSESW. The CoA carboxyltransferase N-terminal domain occupies 68–324; that stretch reads PSTECPQCHS…YRLLAKLTHV (257 aa). Cys-72, Cys-75, Cys-91, and Cys-94 together coordinate Zn(2+). A C4-type zinc finger spans residues 72 to 94; sequence CPQCHSMITNTALIFNAYVCPHC.

The protein belongs to the AccD/PCCB family. Acetyl-CoA carboxylase is a heterohexamer composed of biotin carboxyl carrier protein (AccB), biotin carboxylase (AccC) and two subunits each of ACCase subunit alpha (AccA) and ACCase subunit beta (AccD). The cofactor is Zn(2+).

It localises to the cytoplasm. It carries out the reaction N(6)-carboxybiotinyl-L-lysyl-[protein] + acetyl-CoA = N(6)-biotinyl-L-lysyl-[protein] + malonyl-CoA. The protein operates within lipid metabolism; malonyl-CoA biosynthesis; malonyl-CoA from acetyl-CoA: step 1/1. In terms of biological role, component of the acetyl coenzyme A carboxylase (ACC) complex. Biotin carboxylase (BC) catalyzes the carboxylation of biotin on its carrier protein (BCCP) and then the CO(2) group is transferred by the transcarboxylase to acetyl-CoA to form malonyl-CoA. The protein is Acetyl-coenzyme A carboxylase carboxyl transferase subunit beta of Psychrobacter sp. (strain PRwf-1).